We begin with the raw amino-acid sequence, 852 residues long: Protein Shroom1 (852 aa).

At methionine 1 the chain carries N-acetylmethionine. Serine 18 bears the Phosphoserine mark. Disordered stretches follow at residues 34-54 (SSFSAASGGPEPRTQSPGTDL), 81-109 (TSPRPRPAVAARSGPQPTEVPGTPGPLNR), and 125-218 (AAQA…ANQQ). Threonine 103 carries the phosphothreonine modification. Residues 125 to 144 (AAQAAEPPSPPASRAAYRQR) show a composition bias toward low complexity. A phosphoserine mark is found at serine 133 and serine 137. One can recognise an ASD1 domain in the interval 145–233 (LQGAQRRVLR…SEPGKLDRVG (89 aa)). Positions 152–164 (VLRETSFQRKELR) are enriched in basic and acidic residues. Serine 166, serine 190, and serine 224 each carry phosphoserine. Disordered stretches follow at residues 276 to 320 (LPET…GSGG), 399 to 431 (MRSPPDPHASQGPPASVHASDQPYGTGLGQRTG), 464 to 496 (SRPTSHTPTGTANDNIPTIDPTGLTTNPPTAAE), and 823 to 852 (DLGHHAPSPSPARPPGTCPPVQPPFPLLLT). Over residues 279 to 289 (TQPQGSMNLDS) the composition is skewed to polar residues. Residues 301 to 313 (ASRSRSASGEVLG) show a composition bias toward low complexity. The span at 465 to 479 (RPTSHTPTGTANDNI) shows a compositional bias: polar residues. Positions 543 to 825 (EELVQELARL…QLDAIRDDLG (283 aa)) constitute an ASD2 domain. Residues 830 to 852 (SPSPARPPGTCPPVQPPFPLLLT) show a composition bias toward pro residues.

The protein belongs to the shroom family. As to quaternary structure, interacts with F-actin.

The protein localises to the cytoplasm. It localises to the cytoskeleton. In terms of biological role, may be involved in the assembly of microtubule arrays during cell elongation. The sequence is that of Protein Shroom1 (SHROOM1) from Homo sapiens (Human).